A 179-amino-acid chain; its full sequence is Endoribonuclease YbeY (179 aa).

H148, H152, and H158 together coordinate Zn(2+).

Belongs to the endoribonuclease YbeY family. Zn(2+) is required as a cofactor.

The protein localises to the cytoplasm. In terms of biological role, single strand-specific metallo-endoribonuclease involved in late-stage 70S ribosome quality control and in maturation of the 3' terminus of the 16S rRNA. The chain is Endoribonuclease YbeY from Prochlorococcus marinus (strain AS9601).